We begin with the raw amino-acid sequence, 181 residues long: Large ribosomal subunit protein uL16 (181 aa).

It belongs to the universal ribosomal protein uL16 family. Part of the 50S ribosomal subunit.

In Pyrococcus furiosus (strain ATCC 43587 / DSM 3638 / JCM 8422 / Vc1), this protein is Large ribosomal subunit protein uL16.